We begin with the raw amino-acid sequence, 82 residues long: uncharacterized protein (82 aa).

2 consecutive transmembrane segments (helical) span residues 8-28 (LTTA…LPAP) and 50-70 (LYTL…YFVL).

It is found in the cell membrane. This is an uncharacterized protein from Escherichia coli (strain K12).